A 57-amino-acid chain; its full sequence is Large ribosomal subunit protein bL33 (57 aa).

This sequence belongs to the bacterial ribosomal protein bL33 family.

The polypeptide is Large ribosomal subunit protein bL33 (Shewanella sp. (strain W3-18-1)).